Here is a 1128-residue protein sequence, read N- to C-terminus: Mastermind-like protein 2 (1128 aa).

Disordered regions lie at residues Met1–Leu22 and Gln81–Arg167. Over residues Gly12–Leu22 the composition is skewed to gly residues. The span at Pro113–Ala122 shows a compositional bias: low complexity. Phosphoserine is present on Ser177. Disordered regions lie at residues Phe343–Gln509, Ser521–Pro649, Gln677–Asn714, Gln758–Thr794, and Gly1039–Asp1073. Polar residues-rich tracts occupy residues Leu347–Arg357 and Gly374–Pro387. Low complexity predominate over residues Ser395 to Ala426. Polar residues predominate over residues Gln431–Arg446. Low complexity-rich tracts occupy residues His453 to Pro473 and Pro484 to Ser497. Positions Asn566–Pro584 are enriched in polar residues. Over residues Thr590–Pro649 the composition is skewed to low complexity. Polar residues-rich tracts occupy residues Gln677–Gly695, Asn778–Thr794, and Gly1039–Pro1052.

The protein belongs to the mastermind family. Interacts through its N-terminal region with the ankyrin repeat region of the Notch proteins NOTCH1, NOTCH2, NOTCH3 and NOTCH4. Forms a DNA-binding complex with Notch proteins and RBPSUH/RBP-J kappa.

It localises to the nucleus speckle. Functionally, acts as a transcriptional coactivator for NOTCH proteins. Has been shown to amplify NOTCH-induced transcription of HES1. Potentiates activation by NOTCH3 and NOTCH4 more efficiently than MAML1 or MAML3. The polypeptide is Mastermind-like protein 2 (MAML2) (Bos taurus (Bovine)).